Consider the following 310-residue polypeptide: Ribosomal RNA large subunit methyltransferase F (310 aa).

It belongs to the methyltransferase superfamily. METTL16/RlmF family.

It is found in the cytoplasm. It carries out the reaction adenosine(1618) in 23S rRNA + S-adenosyl-L-methionine = N(6)-methyladenosine(1618) in 23S rRNA + S-adenosyl-L-homocysteine + H(+). Specifically methylates the adenine in position 1618 of 23S rRNA. The chain is Ribosomal RNA large subunit methyltransferase F from Psychromonas ingrahamii (strain DSM 17664 / CCUG 51855 / 37).